The sequence spans 639 residues: Versicolorin B synthase stcN (639 aa).

An N-terminal signal peptide occupies residues 1-19 (MPAWSLLVLSALPVVGMFA). FAD contacts are provided by residues 77-78 (TA) and 98-99 (EA). An N-linked (GlcNAc...) asparagine glycan is attached at Asn-109. 164-167 (GAML) contributes to the FAD binding site. N-linked (GlcNAc...) asparagine glycosylation occurs at Asn-214. Residues 263–301 (GFSNGQLLGRSYITHTIHPKTRRRDTASTSYLQTALRTS) form the PAS domain. N-linked (GlcNAc...) asparagine glycosylation is found at Asn-444 and Asn-501. Residues Ala-609 and 620-621 (PM) each bind FAD.

The protein belongs to the GMC oxidoreductase family. As to quaternary structure, homodimer. It depends on FAD as a cofactor.

The protein localises to the cytoplasm. The protein resides in the cytosol. The catalysed reaction is (2S-3S)-versiconal hemiacetal = versicolorin B + H2O. The enzyme catalyses (S)-5'-oxoaverantin + H(+) = (1'S,5'S)-averufin + H2O. Its pathway is mycotoxin biosynthesis; sterigmatocystin biosynthesis. Its function is as follows. Norsolorinic acid reductase; part of the gene cluster that mediates the biosynthesis of sterigmatocystin (ST), a polyketide-derived furanocoumarin which is part of the most toxic and carcinogenic compounds among the known mycotoxins. The first step in the biosynthesis of sterigmatocystin is the production of hexanoate by the fatty acid synthase (FAS) units stcJ and stcK. The polyketide backbone is assembled by the non-reducing polyketide synthase stcA by condensation of the starter hexanoyl-CoA and 7 malonyl-CoA extender units followed by cyclization and release of norsolorinic acid. Norsolorinic acid is the first stable intermediate in the biosynthesis of sterigmatocystin and is converted into averantin (AVN) by the ketoreductase stcE which reduces the hexanoate ketone to an alcohol. Averantin is then oxidized into 5'-hydroxyaverantin (HAVN) by the cytochrome P450 monooxygenase stcF. 5'-hydroxyaverantin is further converted to 5'-oxyaverantin (OAVN) by the 5'-hydroxyaverantin dehydrogenase stcG. The next step is the conversion of OAVN into averufin (AVF) which is catalyzed by a yet to be identified enzyme. The cytochrome P450 monooxygenase stcB and the flavin-binding monooxygenase stcW are both required for the conversion of averufin to 1-hydroxyversicolorone. The esterase stcI probably catalyzes the formation of versiconal hemiacetal acetate from 1-hydroxyversicolorone. The oxydoreductase stcN then probably catalyzes the biosynthetic step from versiconal to versicolorin B (VERB). The next step is performed by the versicolorin B desaturase stcL to produce versicolorin A (VERA). The ketoreductase stcU and the cytochrome P450 monooxygenase stcS are involved in the conversion of versicolorin A to demethylsterigmatocystin. The Baeyer-Villiger oxidas stcQ and the reductase stcR might be involved in the biosynthetic step from versicolorin A to demethylsterigmatocystin. The final step in the biosynthesis of sterigmatocystin is the methylation of demethylsterigmatocystin catalyzed by the methyltransferase stcP. This Emericella nidulans (strain FGSC A4 / ATCC 38163 / CBS 112.46 / NRRL 194 / M139) (Aspergillus nidulans) protein is Versicolorin B synthase stcN.